We begin with the raw amino-acid sequence, 417 residues long: Phosphoglycerate kinase, cytosolic (417 aa).

(2R)-3-phosphoglycerate is bound by residues Val23, Asp24, Phe25, Asn26, Arg39, Ser61, His62, Gly64, Arg65, Arg132, His168, and Arg169. Residues Gly214 and Ala215 each contribute to the ADP site. Residue Gly214 coordinates CDP. Residues Ala215 and Lys216 each contribute to the AMP site. Residue Ala215 coordinates ATP. Ala215 is a Mg(2+) binding site. Residue Lys216 coordinates (2R)-3-phosphoglycerate. Asp219 contacts CDP. Residue Asp219 participates in Mg(2+) binding. The ADP site is built by Lys220 and Gly238. Position 220 (Lys220) interacts with AMP. Lys220 is a binding site for ATP. Residue Gly238 participates in CDP binding. Residues Ala239 and Ala311 each contribute to the AMP site. ATP contacts are provided by Ala239 and Ala311. The ADP site is built by Ala311 and Asn335. Residues Gly336 and Phe341 each contribute to the CDP site. ADP is bound by residues Phe341, Glu342, Asp374, and Ser375. Glu342 lines the AMP pocket. 3 residues coordinate ATP: Glu342, Asp374, and Ser375. Mg(2+) is bound at residue Asp374.

Belongs to the phosphoglycerate kinase family. As to quaternary structure, monomer. Requires Mg(2+) as cofactor.

It is found in the cytoplasm. It catalyses the reaction (2R)-3-phosphoglycerate + ATP = (2R)-3-phospho-glyceroyl phosphate + ADP. It functions in the pathway carbohydrate degradation; glycolysis; pyruvate from D-glyceraldehyde 3-phosphate: step 2/5. This chain is Phosphoglycerate kinase, cytosolic (PGKB), found in Leishmania major.